The primary structure comprises 279 residues: Tetra-spanning protein 1 (279 aa).

2 helical membrane passes run 25–45 (VWFS…LQAI) and 50–70 (APPF…AIVL). A glycan (N-linked (GlcNAc...) asparagine) is linked at N77. The helical transmembrane segment at 100-122 (YFILALSMLIDRPILFSLAPYAI) threads the bilayer. An N-linked (GlcNAc...) asparagine glycan is attached at N143. Residues 172 to 192 (MQLVASLETFLLFRLFFGVFL) traverse the membrane as a helical segment. The disordered stretch occupies residues 260 to 279 (VGTAQSRPTASSSTTAPSST). The segment covering 262-279 (TAQSRPTASSSTTAPSST) has biased composition (low complexity).

The protein belongs to the PER33/POM33 family. As to quaternary structure, interacts with RTN1 and YOP1.

It localises to the golgi apparatus membrane. The protein localises to the endoplasmic reticulum membrane. Its subcellular location is the nucleus membrane. In terms of biological role, required for the correct positioning of the cellular division plane by delimiting the actomyosin ring assembly at the cell equator. This chain is Tetra-spanning protein 1 (tts1), found in Schizosaccharomyces pombe (strain 972 / ATCC 24843) (Fission yeast).